A 321-amino-acid chain; its full sequence is Cytochrome f (321 aa).

Positions 1–38 (MKKNFYTISKTMSRSLKLILFSVFIGFSIFLIPQPTWA) are cleaved as a signal peptide. Heme contacts are provided by Tyr-39, Cys-59, Cys-62, and His-63. The chain crosses the membrane as a helical span at residues 288–308 (VIGMIIFFIGVGLSQIMLVLK).

This sequence belongs to the cytochrome f family. The 4 large subunits of the cytochrome b6-f complex are cytochrome b6, subunit IV (17 kDa polypeptide, PetD), cytochrome f and the Rieske protein, while the 4 small subunits are PetG, PetL, PetM and PetN. The complex functions as a dimer. The cofactor is heme.

Its subcellular location is the cellular thylakoid membrane. In terms of biological role, component of the cytochrome b6-f complex, which mediates electron transfer between photosystem II (PSII) and photosystem I (PSI), cyclic electron flow around PSI, and state transitions. This Prochlorococcus marinus (strain NATL1A) protein is Cytochrome f.